Reading from the N-terminus, the 124-residue chain is Small ribosomal subunit protein uS12 (124 aa).

The tract at residues 9–28 (KSERTVQKNQTKSPALDSCP) is disordered. 3-methylthioaspartic acid is present on Asp89.

This sequence belongs to the universal ribosomal protein uS12 family. In terms of assembly, part of the 30S ribosomal subunit. Contacts proteins S8 and S17. May interact with IF1 in the 30S initiation complex.

With S4 and S5 plays an important role in translational accuracy. Its function is as follows. Interacts with and stabilizes bases of the 16S rRNA that are involved in tRNA selection in the A site and with the mRNA backbone. Located at the interface of the 30S and 50S subunits, it traverses the body of the 30S subunit contacting proteins on the other side and probably holding the rRNA structure together. The combined cluster of proteins S8, S12 and S17 appears to hold together the shoulder and platform of the 30S subunit. The polypeptide is Small ribosomal subunit protein uS12 (Bdellovibrio bacteriovorus (strain ATCC 15356 / DSM 50701 / NCIMB 9529 / HD100)).